A 164-amino-acid chain; its full sequence is Mineralocorticoid receptor (164 aa).

The region spanning 1-162 (QYSWMCLSSF…EFPRCWWRSS (162 aa)) is the NR LBD domain. 21-hydroxyprogesterone-binding residues include R15 and T143. Positions 15 and 143 each coordinate aldosterone. R15 and T143 together coordinate progesterone.

This sequence belongs to the nuclear hormone receptor family. NR3 subfamily. Heteromultimeric cytoplasmic complex with HSP90, HSP70, and FKBP4, in the absence of ligand. After ligand binding, it translocates to the nucleus and binds to DNA as a homodimer and as a heterodimer with NR3C1. Binds the coactivator NCOA2. May interact with HSD11B2 in the absence of ligand. Binds the coactivators NCOA1, TIF1 and NRIP1. In terms of processing, phosphorylated.

The protein resides in the cytoplasm. It is found in the nucleus. Its subcellular location is the endoplasmic reticulum membrane. Its function is as follows. Receptor for both mineralocorticoids (MC) such as aldosterone and glucocorticoids (GC) such as corticosterone or cortisol. Binds to mineralocorticoid response elements (MRE) and transactivates target genes. The effect of MC is to increase ion and water transport and thus raise extracellular fluid volume and blood pressure and lower potassium levels. The protein is Mineralocorticoid receptor (NR3C2) of Sus scrofa (Pig).